A 551-amino-acid chain; its full sequence is Bestrophin-1 (551 aa).

Over 1–31 (MTITYTNKVANARLGSFSSLLLCWRGSIYKL) the chain is Cytoplasmic. A10 provides a ligand contact to Ca(2+). A helical membrane pass occupies residues 32–51 (LYGEFLVFIFLYYSIRGLYR). The Extracellular portion of the chain corresponds to 52 to 60 (MVLSSDQQL). A helical transmembrane segment spans residues 61-82 (LFEKLALYCDSYIQLIPISFVL). Residues 83–237 (GFYVTLVVSR…DWISIPLVYT (155 aa)) are Cytoplasmic-facing. A helical membrane pass occupies residues 238–255 (QVVTVAVYSFFLACLIGR). The Extracellular portion of the chain corresponds to 256–274 (QFLNPNKDYPGHEMDLVVP). A helical transmembrane segment spans residues 275–288 (VFTILQFLFYMGWL). The Cytoplasmic segment spans residues 289-551 (KVAEQLINPF…EAGTKPVLYE (263 aa)). 4 residues coordinate Ca(2+): Q293, N296, D301, and D304. Positions 346-379 (PYTAASARSRRHSFMGSTFNISLKKEDLELWSKE) are auto-inhibitory segment. Positions 459–489 (SHCGPQAPSSHPTEQSAPSSSDTGDGPSTDY) are disordered. A compositionally biased stretch (polar residues) spans 465 to 475 (APSSHPTEQSA). Residues 476 to 488 (PSSSDTGDGPSTD) are compositionally biased toward low complexity.

This sequence belongs to the anion channel-forming bestrophin (TC 1.A.46) family. Calcium-sensitive chloride channel subfamily. Interacts with YWHAG; this interaction promotes the ligand-gated L-glutamate channel activity leading to the positive regulation of NMDA glutamate receptor activity through the L-glutamate secretion.

The protein resides in the cell membrane. It is found in the basolateral cell membrane. It catalyses the reaction 4-aminobutanoate(in) = 4-aminobutanoate(out). The catalysed reaction is L-glutamate(out) = L-glutamate(in). It carries out the reaction chloride(in) = chloride(out). The enzyme catalyses hydrogencarbonate(in) = hydrogencarbonate(out). It catalyses the reaction D-serine(in) = D-serine(out). Its activity is regulated as follows. Inactivated by sulfhydryl-reactive agents. In terms of biological role, ligand-gated anion channel that allows the movement of anions across cell membranes when activated by calcium (Ca2+). Allows the movement of chloride and hydrogencarbonate. Found in a partially open conformation leading to significantly smaller chloride movement. Upon F2R/PAR-1 activation, the sequestered calcium is released into the cytosol of astrocytes, leading to the (Ca2+)-dependent release of L-glutamate into the synaptic cleft that targets the neuronal postsynaptic GRIN2A/NMDAR receptor resulting in the synaptic plasticity regulation. Upon activation of the norepinephrine-alpha-1 adrenergic receptor signaling pathway, transports as well D-serine than L-glutamate in a (Ca2+)-dependent manner, leading to activation of adjacent NMDAR receptors and therefore regulates the heterosynaptic long-term depression and metaplasticity during initial memory acquisition. Releases the 4-aminobutanoate neurotransmitter in a (Ca2+)-dependent manner, and participates in its tonic release from cerebellar glial cells. In Mus musculus (Mouse), this protein is Bestrophin-1.